The following is a 698-amino-acid chain: Elongation factor G 1 (698 aa).

A tr-type G domain is found at 8–290 (ERYRNIGICA…AVIEFLPAPV (283 aa)). Residues 17-24 (AHVDAGKT), 88-92 (DTPGH), and 142-145 (NKMD) contribute to the GTP site.

It belongs to the TRAFAC class translation factor GTPase superfamily. Classic translation factor GTPase family. EF-G/EF-2 subfamily.

It localises to the cytoplasm. Functionally, catalyzes the GTP-dependent ribosomal translocation step during translation elongation. During this step, the ribosome changes from the pre-translocational (PRE) to the post-translocational (POST) state as the newly formed A-site-bound peptidyl-tRNA and P-site-bound deacylated tRNA move to the P and E sites, respectively. Catalyzes the coordinated movement of the two tRNA molecules, the mRNA and conformational changes in the ribosome. This chain is Elongation factor G 1, found in Aliivibrio fischeri (strain ATCC 700601 / ES114) (Vibrio fischeri).